Here is a 128-residue protein sequence, read N- to C-terminus: S-adenosylmethionine decarboxylase proenzyme (128 aa).

Serine 61 acts as the Schiff-base intermediate with substrate; via pyruvic acid in catalysis. Serine 61 is subject to Pyruvic acid (Ser); by autocatalysis. The Proton acceptor; for processing activity role is filled by histidine 66. The active-site Proton donor; for catalytic activity is the cysteine 81.

Belongs to the prokaryotic AdoMetDC family. Type 1 subfamily. As to quaternary structure, heterotetramer of two alpha and two beta chains arranged as a dimer of alpha/beta heterodimers. Pyruvate is required as a cofactor. Is synthesized initially as an inactive proenzyme. Formation of the active enzyme involves a self-maturation process in which the active site pyruvoyl group is generated from an internal serine residue via an autocatalytic post-translational modification. Two non-identical subunits are generated from the proenzyme in this reaction, and the pyruvate is formed at the N-terminus of the alpha chain, which is derived from the carboxyl end of the proenzyme. The post-translation cleavage follows an unusual pathway, termed non-hydrolytic serinolysis, in which the side chain hydroxyl group of the serine supplies its oxygen atom to form the C-terminus of the beta chain, while the remainder of the serine residue undergoes an oxidative deamination to produce ammonia and the pyruvoyl group blocking the N-terminus of the alpha chain.

The enzyme catalyses S-adenosyl-L-methionine + H(+) = S-adenosyl 3-(methylsulfanyl)propylamine + CO2. It functions in the pathway amine and polyamine biosynthesis; S-adenosylmethioninamine biosynthesis; S-adenosylmethioninamine from S-adenosyl-L-methionine: step 1/1. Catalyzes the decarboxylation of S-adenosylmethionine to S-adenosylmethioninamine (dcAdoMet), the propylamine donor required for the synthesis of the polyamines spermine and spermidine from the diamine putrescine. This is S-adenosylmethionine decarboxylase proenzyme from Synechococcus sp. (strain WH7803).